The chain runs to 525 residues: GMP synthase [glutamine-hydrolyzing] (525 aa).

The 201-residue stretch at 7-207 folds into the Glutamine amidotransferase type-1 domain; it reads RILVIDFGSQ…ITCICRCKSS (201 aa). The active-site Nucleophile is the cysteine 84. Residues histidine 181 and glutamate 183 contribute to the active site. In terms of domain architecture, GMPS ATP-PPase spans 208 to 400; the sequence is WKIANIIDDI…LGIPYDIAYR (193 aa). 235 to 241 is an ATP binding site; it reads SGGIDSL.

Homodimer.

The catalysed reaction is XMP + L-glutamine + ATP + H2O = GMP + L-glutamate + AMP + diphosphate + 2 H(+). The protein operates within purine metabolism; GMP biosynthesis; GMP from XMP (L-Gln route): step 1/1. Its function is as follows. Catalyzes the synthesis of GMP from XMP. The protein is GMP synthase [glutamine-hydrolyzing] of Blochmanniella pennsylvanica (strain BPEN).